Consider the following 414-residue polypeptide: Histidine--tRNA ligase (414 aa).

It belongs to the class-II aminoacyl-tRNA synthetase family. Homodimer.

It localises to the cytoplasm. The catalysed reaction is tRNA(His) + L-histidine + ATP = L-histidyl-tRNA(His) + AMP + diphosphate + H(+). This chain is Histidine--tRNA ligase, found in Ehrlichia ruminantium (strain Gardel).